The primary structure comprises 221 residues: Stromal cell-derived factor 2-like protein 1 (221 aa).

A signal peptide spans 1-28 (MWSAGRGGAAWPVLLGLLLALLVPGGGA). MIR domains lie at 33–87 (AELV…IRGG), 95–150 (GSPV…VRCS), and 151–205 (GQHW…AMEG). Residue serine 215 is modified to Phosphoserine. The short motif at 218–221 (HDEL) is the Prevents secretion from ER element.

In terms of assembly, part of a large chaperone multiprotein complex comprising CABP1, DNAJB11, HSP90B1, HSPA5, HYOU, PDIA2, PDIA4, PPIB, SDF2L1, UGGT1 and very small amounts of ERP29, but not, or at very low levels, CALR nor CANX. Ubiquitously expressed with high expression in testis, moderate expression in the pancreas, spleen, prostate, small intestine and colon. Very low expression is seen in brain and skeletal muscle.

It is found in the endoplasmic reticulum lumen. The protein is Stromal cell-derived factor 2-like protein 1 (SDF2L1) of Homo sapiens (Human).